A 275-amino-acid chain; its full sequence is Pyridoxal phosphate homeostasis protein (275 aa).

A Phosphoserine modification is found at Ser6. Residue Lys47 is modified to N6-(pyridoxal phosphate)lysine. Tyr69 bears the Phosphotyrosine mark. Lys125 carries the N6-succinyllysine modification. A phosphoserine mark is found at Ser226 and Ser244. The segment covering 251 to 263 has biased composition (basic and acidic residues); the sequence is DYSKKPTPDKCAA. The segment at 251–275 is disordered; the sequence is DYSKKPTPDKCAADVKAPLEVAQEH.

The protein belongs to the pyridoxal phosphate-binding protein YggS/PROSC family. As to expression, ubiquitous.

Pyridoxal 5'-phosphate (PLP)-binding protein, which may be involved in intracellular homeostatic regulation of pyridoxal 5'-phosphate (PLP), the active form of vitamin B6. The chain is Pyridoxal phosphate homeostasis protein from Homo sapiens (Human).